We begin with the raw amino-acid sequence, 756 residues long: Ribosomal RNA large subunit methyltransferase K/L (756 aa).

In terms of domain architecture, THUMP spans 46-157; the sequence is TAYRLCLWSR…RGEAILSLDL (112 aa). Residues 395 to 409 show a composition bias toward basic and acidic residues; it reads ERRTPEQRQAEREQA. The tract at residues 395 to 441 is disordered; that stretch reads ERRTPEQRQAEREQAAYDQTPNEPQERKFNKNGNPIKPTPAPAPVIE.

Belongs to the methyltransferase superfamily. RlmKL family.

Its subcellular location is the cytoplasm. It carries out the reaction guanosine(2445) in 23S rRNA + S-adenosyl-L-methionine = N(2)-methylguanosine(2445) in 23S rRNA + S-adenosyl-L-homocysteine + H(+). The catalysed reaction is guanosine(2069) in 23S rRNA + S-adenosyl-L-methionine = N(2)-methylguanosine(2069) in 23S rRNA + S-adenosyl-L-homocysteine + H(+). Specifically methylates the guanine in position 2445 (m2G2445) and the guanine in position 2069 (m7G2069) of 23S rRNA. In Pseudomonas fluorescens (strain Pf0-1), this protein is Ribosomal RNA large subunit methyltransferase K/L.